We begin with the raw amino-acid sequence, 248 residues long: MILLGVNIDHCATLRQARYRQAEATAGGPIEPDPVTLALAAERAGADGITVHLREDRRHIQERDVWRLRESIATRLNFEMACTPAMTQLALKLKPESVCLVPENRQEITTEGGLDVTAQRDRVRACVEAMNAAGIQASLFIDPDEQQIELAAQLHAPCVELHTGAYASSYPQPTSRTKEFQRLRMGAARAHELGLIVNAGHGINYVNIAEVRTLPHLHELNIGHSIISRALFTGIDEAVREMKVRMNP.

Asparagine 7 is a binding site for 3-amino-2-oxopropyl phosphate. 9 to 10 provides a ligand contact to 1-deoxy-D-xylulose 5-phosphate; that stretch reads DH. Arginine 18 is a 3-amino-2-oxopropyl phosphate binding site. Catalysis depends on histidine 52, which acts as the Proton acceptor. 1-deoxy-D-xylulose 5-phosphate contacts are provided by arginine 54 and histidine 59. Glutamate 79 serves as the catalytic Proton acceptor. Threonine 109 is a binding site for 1-deoxy-D-xylulose 5-phosphate. Histidine 201 serves as the catalytic Proton donor. Residues glycine 202 and 223 to 224 each bind 3-amino-2-oxopropyl phosphate; that span reads GH.

It belongs to the PNP synthase family. As to quaternary structure, homooctamer; tetramer of dimers.

It localises to the cytoplasm. It catalyses the reaction 3-amino-2-oxopropyl phosphate + 1-deoxy-D-xylulose 5-phosphate = pyridoxine 5'-phosphate + phosphate + 2 H2O + H(+). Its pathway is cofactor biosynthesis; pyridoxine 5'-phosphate biosynthesis; pyridoxine 5'-phosphate from D-erythrose 4-phosphate: step 5/5. In terms of biological role, catalyzes the complicated ring closure reaction between the two acyclic compounds 1-deoxy-D-xylulose-5-phosphate (DXP) and 3-amino-2-oxopropyl phosphate (1-amino-acetone-3-phosphate or AAP) to form pyridoxine 5'-phosphate (PNP) and inorganic phosphate. This is Pyridoxine 5'-phosphate synthase from Opitutus terrae (strain DSM 11246 / JCM 15787 / PB90-1).